The primary structure comprises 160 residues: 3-dehydroquinate dehydratase (160 aa).

The Proton acceptor role is filled by tyrosine 22. Substrate-binding residues include asparagine 73, histidine 79, and aspartate 86. Catalysis depends on histidine 99, which acts as the Proton donor. Residues 100 to 101 (IS) and arginine 110 contribute to the substrate site.

It belongs to the type-II 3-dehydroquinase family. As to quaternary structure, homododecamer.

The catalysed reaction is 3-dehydroquinate = 3-dehydroshikimate + H2O. It functions in the pathway metabolic intermediate biosynthesis; chorismate biosynthesis; chorismate from D-erythrose 4-phosphate and phosphoenolpyruvate: step 3/7. In terms of biological role, catalyzes a trans-dehydration via an enolate intermediate. This chain is 3-dehydroquinate dehydratase, found in Sulfurimonas denitrificans (strain ATCC 33889 / DSM 1251) (Thiomicrospira denitrificans (strain ATCC 33889 / DSM 1251)).